Here is a 160-residue protein sequence, read N- to C-terminus: Deoxyuridine 5'-triphosphate nucleotidohydrolase (160 aa).

Residues Ser80, Gly93, Asp96, Tyr99, Lys104, Arg149, Phe154, and Gly155 each coordinate dUMP.

The protein belongs to the dUTPase family. In terms of assembly, homotrimer. The cofactor is Mg(2+).

The enzyme catalyses dUTP + H2O = dUMP + diphosphate + H(+). Its pathway is pyrimidine metabolism; dUMP biosynthesis; dUMP from dCTP (dUTP route): step 2/2. In terms of biological role, involved in nucleotide metabolism via production of dUMP, the immediate precursor of thymidine nucleotides, and decreases the intracellular concentration of dUTP so that uracil cannot be incorporated into DNA. The sequence is that of Deoxyuridine 5'-triphosphate nucleotidohydrolase (DUT1) from Debaryomyces hansenii (strain ATCC 36239 / CBS 767 / BCRC 21394 / JCM 1990 / NBRC 0083 / IGC 2968) (Yeast).